Consider the following 291-residue polypeptide: uncharacterized protein (291 aa).

6 consecutive transmembrane segments (helical) span residues 13–33, 40–60, 81–101, 128–148, 158–178, and 220–240; these read FDLFFAAIACICGILKVMEMG, LGTVSKNGMAVLAVLVALGFL, GFLNPCVILSVIEFFMMLICI, FGLFGAIFMPYIFAECIRLLL, VILGILVLGCLAMAGLAYLEY, and GNVWMYLAMFASFTLVLILLA. Residue Asn249 is glycosylated (N-linked (GlcNAc...) asparagine). Residues 269–291 are disordered; that stretch reads MASEDPPKDPLPRQEGGGGDTIA.

Its subcellular location is the membrane. This is an uncharacterized protein from Encephalitozoon cuniculi (strain GB-M1) (Microsporidian parasite).